A 576-amino-acid chain; its full sequence is Putative export ATP-binding/permease protein RT0691 (576 aa).

One can recognise an ABC transmembrane type-1 domain in the interval leucine 20–leucine 303. Transmembrane regions (helical) follow at residues isoleucine 21–phenylalanine 41, isoleucine 61–phenylalanine 81, phenylalanine 135–phenylalanine 155, phenylalanine 158–phenylalanine 178, alanine 242–isoleucine 262, and isoleucine 277–leucine 297. Residues isoleucine 336–glutamate 572 form the ABC transporter domain. Residue glycine 371–serine 378 coordinates ATP.

It belongs to the ABC transporter superfamily. In terms of assembly, homodimer.

It is found in the cell inner membrane. Functionally, part of an ABC transporter complex. Transmembrane domains (TMD) form a pore in the inner membrane and the ATP-binding domain (NBD) is responsible for energy generation. This Rickettsia typhi (strain ATCC VR-144 / Wilmington) protein is Putative export ATP-binding/permease protein RT0691.